A 464-amino-acid polypeptide reads, in one-letter code: tRNA-2-methylthio-N(6)-dimethylallyladenosine synthase (464 aa).

An MTTase N-terminal domain is found at 19 to 135; it reads GSYWITTFGC…LENLLGKVDL (117 aa). The [4Fe-4S] cluster site is built by cysteine 28, cysteine 64, cysteine 98, cysteine 170, cysteine 174, and cysteine 177. In terms of domain architecture, Radical SAM core spans 156-394; the sequence is RESSICGWVN…DLVEKTARSR (239 aa). The 69-residue stretch at 396-464 folds into the TRAM domain; sequence KRYINNIESV…PFSLTGELYL (69 aa).

This sequence belongs to the methylthiotransferase family. MiaB subfamily. In terms of assembly, monomer. The cofactor is [4Fe-4S] cluster.

It is found in the cytoplasm. It carries out the reaction N(6)-dimethylallyladenosine(37) in tRNA + (sulfur carrier)-SH + AH2 + 2 S-adenosyl-L-methionine = 2-methylsulfanyl-N(6)-dimethylallyladenosine(37) in tRNA + (sulfur carrier)-H + 5'-deoxyadenosine + L-methionine + A + S-adenosyl-L-homocysteine + 2 H(+). In terms of biological role, catalyzes the methylthiolation of N6-(dimethylallyl)adenosine (i(6)A), leading to the formation of 2-methylthio-N6-(dimethylallyl)adenosine (ms(2)i(6)A) at position 37 in tRNAs that read codons beginning with uridine. In Prochlorococcus marinus (strain AS9601), this protein is tRNA-2-methylthio-N(6)-dimethylallyladenosine synthase.